The chain runs to 508 residues: Photosystem II CP47 reaction center protein (508 aa).

Helical transmembrane passes span 21-36 (SVHI…WAGS), 101-115 (IVFS…IWHW), 140-156 (GIHL…FGAF), 203-218 (IAAG…FHLS), 237-252 (VLSS…AFVV), and 457-472 (SFAL…HGAR).

Belongs to the PsbB/PsbC family. PsbB subfamily. In terms of assembly, PSII is composed of 1 copy each of membrane proteins PsbA, PsbB, PsbC, PsbD, PsbE, PsbF, PsbH, PsbI, PsbJ, PsbK, PsbL, PsbM, PsbT, PsbX, PsbY, PsbZ, Psb30/Ycf12, at least 3 peripheral proteins of the oxygen-evolving complex and a large number of cofactors. It forms dimeric complexes. Requires Binds multiple chlorophylls. PSII binds additional chlorophylls, carotenoids and specific lipids. as cofactor.

Its subcellular location is the plastid. The protein resides in the chloroplast thylakoid membrane. One of the components of the core complex of photosystem II (PSII). It binds chlorophyll and helps catalyze the primary light-induced photochemical processes of PSII. PSII is a light-driven water:plastoquinone oxidoreductase, using light energy to abstract electrons from H(2)O, generating O(2) and a proton gradient subsequently used for ATP formation. The sequence is that of Photosystem II CP47 reaction center protein from Gossypium hirsutum (Upland cotton).